Here is a 442-residue protein sequence, read N- to C-terminus: GTPase Der (442 aa).

2 consecutive EngA-type G domains span residues 3–167 (PTIV…PADD) and 177–350 (PRVA…AAAM). GTP contacts are provided by residues 9 to 16 (GRPNVGKS), 56 to 60 (DTAGF), 119 to 122 (NKAE), 183 to 190 (GRPNVGKS), 230 to 234 (DTAGL), and 295 to 298 (NKWD). Residues 351-435 (SNLSTPRLTR…PLRIQFRTAH (85 aa)) enclose the KH-like domain.

Belongs to the TRAFAC class TrmE-Era-EngA-EngB-Septin-like GTPase superfamily. EngA (Der) GTPase family. As to quaternary structure, associates with the 50S ribosomal subunit.

In terms of biological role, GTPase that plays an essential role in the late steps of ribosome biogenesis. This is GTPase Der from Azoarcus sp. (strain BH72).